A 233-amino-acid polypeptide reads, in one-letter code: Sugar fermentation stimulation protein homolog (233 aa).

The protein belongs to the SfsA family.

The protein is Sugar fermentation stimulation protein homolog of Chelativorans sp. (strain BNC1).